A 912-amino-acid polypeptide reads, in one-letter code: Intercellular adhesion molecule 5 (912 aa).

The first 29 residues, 1-29, serve as a signal peptide directing secretion; the sequence is MPGPSPGLRALLGFWVALGLGILRLSAVA. At 30–826 the chain is on the extracellular side; the sequence is QEPFWADLQP…RITVRVAGPW (797 aa). Ig-like C2-type domains lie at 47 to 127, 132 to 232, 239 to 324, 332 to 395, 403 to 481, 486 to 561, 566 to 645, 659 to 734, and 738 to 819; these read GGSL…PLPP, GENF…RLLA, DSQS…LLTL, GKLV…NGSA, PRLD…VTLT, PALD…VAVT, PSFE…NPLG, PQMD…TVGV, and PVVA…RRIT. A glycan (N-linked (GlcNAc...) (high mannose) asparagine) is linked at Asn53. Cystine bridges form between Cys54–Cys97 and Cys58–Cys101. An N-linked (GlcNAc...) asparagine glycan is attached at Asn134. Residues Cys139 and Cys195 are joined by a disulfide bond. Thr179 and Thr181 each carry phosphothreonine. N-linked (GlcNAc...) asparagine glycosylation is found at Asn192 and Asn211. The cysteines at positions 246 and 297 are disulfide-linked. N-linked (GlcNAc...) asparagine glycosylation is found at Asn311, Asn366, and Asn392. Cysteines 339 and 378 form a disulfide. Cystine bridges form between Cys410–Cys465, Cys493–Cys546, and Cys573–Cys638. N-linked (GlcNAc...) asparagine glycans are attached at residues Asn576 and Asn639. The cysteines at positions 666 and 717 are disulfide-linked. Positions 678–708 are disordered; it reads AAGPACARGRPSPRVRCSREGAPRPARPRVS. Asn756, Asn787, and Asn788 each carry an N-linked (GlcNAc...) asparagine glycan. Cys761 and Cys806 are joined by a disulfide. Residues 827–847 traverse the membrane as a helical segment; sequence LWIAVGGAVGGAVLLAAGAGL. The Cytoplasmic portion of the chain corresponds to 848-912; that stretch reads AFYVQSTACK…EVFAIQLTSA (65 aa). The disordered stretch occupies residues 880–902; that stretch reads GGAGSGAEGGPEAEDSAESPAGG.

It belongs to the immunoglobulin superfamily. ICAM family. Glycosylation at Asn-53 is critical for functional folding. As to expression, expressed on neurons in the most rostral segment of the mammalian brain, the telencephalon.

The protein localises to the membrane. Functionally, ICAM proteins are ligands for the leukocyte adhesion protein LFA-1 (integrin alpha-L/beta-2). This chain is Intercellular adhesion molecule 5 (ICAM5), found in Oryctolagus cuniculus (Rabbit).